The chain runs to 1221 residues: DNA replication helicase (1221 aa).

Positions Pro692–Lys701 match the Nuclear localization signal motif. ATP is bound at residue Gly917–Ser924. The segment at residues Ile967–His981 is a DNA-binding region (H-T-H motif).

As to quaternary structure, interacts with IE1 and LEF-3.

Its subcellular location is the host nucleus. The enzyme catalyses ATP + H2O = ADP + phosphate + H(+). Essential for initiation of viral DNA replication, it may contribute to other functions such as controlling the switch to the late phase and leading to the inhibition of host protein synthesis. Required for late and very late gene expression. The polypeptide is DNA replication helicase (HELI) (Lepidoptera (butterflies and moths)).